The chain runs to 395 residues: Lipid-A-disaccharide synthase (395 aa).

Belongs to the LpxB family.

It carries out the reaction a lipid X + a UDP-2-N,3-O-bis[(3R)-3-hydroxyacyl]-alpha-D-glucosamine = a lipid A disaccharide + UDP + H(+). It functions in the pathway bacterial outer membrane biogenesis; LPS lipid A biosynthesis. Condensation of UDP-2,3-diacylglucosamine and 2,3-diacylglucosamine-1-phosphate to form lipid A disaccharide, a precursor of lipid A, a phosphorylated glycolipid that anchors the lipopolysaccharide to the outer membrane of the cell. In Bordetella avium (strain 197N), this protein is Lipid-A-disaccharide synthase.